Here is a 94-residue protein sequence, read N- to C-terminus: MSNKVKTKAMVPPINCIFNFLQQQTPVTIWLFEQIGIRIKGKIVGFDEFMNVVIDEAVEIPVNSADGKEDVEKGTPLGKILLKGDNITLITSAD.

In terms of domain architecture, Sm spans 14-94; sequence INCIFNFLQQ…DNITLITSAD (81 aa).

The protein belongs to the snRNP Sm proteins family. Component of the Sm core complex, present in spliceosomal snRNP U1, U2, U4/U6 and U5. The core complex contains SMB1, SMD1, SMD2, SMD3, SME1, SMX3 and SMX2 (Sm proteins B, D1, D2, D3, E, F and G, respectively), and is probably a heptameric ring structure. SME1 specifically interacts with SMX2 and SMX3. Component of the U4/U6-U5 tri-snRNP complex composed of the U4, U6 and U5 snRNAs and at least PRP3, PRP4, PRP6, PRP8, PRP18, PRP31, PRP38, SNU13, SNU23, SNU66, SNU114, SPP381, SMB1, SMD1, SMD2, SMD3, SMX2, SMX3, LSM2, LSM3, LSM4, LSM5, LSM6, LSM7, LSM8, BRR2 and DIB1.

The protein resides in the cytoplasm. Its subcellular location is the nucleus. Its function is as follows. Involved in pre-mRNA splicing. Binds and is required for the stability of snRNA U1, U2, U4 and U5 which contain a highly conserved structural motif called the Sm binding site. Involved in cap modification. In Saccharomyces cerevisiae (strain ATCC 204508 / S288c) (Baker's yeast), this protein is Small nuclear ribonucleoprotein E (SME1).